A 91-amino-acid polypeptide reads, in one-letter code: Small ribosomal subunit protein uS19 (91 aa).

Belongs to the universal ribosomal protein uS19 family.

Protein S19 forms a complex with S13 that binds strongly to the 16S ribosomal RNA. The sequence is that of Small ribosomal subunit protein uS19 from Amoebophilus asiaticus (strain 5a2).